The following is a 259-amino-acid chain: NAD(P)H-quinone oxidoreductase subunit K 2 (259 aa).

Cys-52, Cys-53, Cys-117, and Cys-148 together coordinate [4Fe-4S] cluster.

The protein belongs to the complex I 20 kDa subunit family. In terms of assembly, NDH-1 can be composed of about 15 different subunits; different subcomplexes with different compositions have been identified which probably have different functions. Requires [4Fe-4S] cluster as cofactor.

It localises to the cellular thylakoid membrane. It catalyses the reaction a plastoquinone + NADH + (n+1) H(+)(in) = a plastoquinol + NAD(+) + n H(+)(out). The catalysed reaction is a plastoquinone + NADPH + (n+1) H(+)(in) = a plastoquinol + NADP(+) + n H(+)(out). Functionally, NDH-1 shuttles electrons from an unknown electron donor, via FMN and iron-sulfur (Fe-S) centers, to quinones in the respiratory and/or the photosynthetic chain. The immediate electron acceptor for the enzyme in this species is believed to be plastoquinone. Couples the redox reaction to proton translocation, and thus conserves the redox energy in a proton gradient. Cyanobacterial NDH-1 also plays a role in inorganic carbon-concentration. The sequence is that of NAD(P)H-quinone oxidoreductase subunit K 2 (ndhK2) from Cyanothece sp. (strain PCC 7425 / ATCC 29141).